A 326-amino-acid polypeptide reads, in one-letter code: Lipoyl synthase (326 aa).

Residues cysteine 56, cysteine 61, cysteine 67, cysteine 82, cysteine 86, cysteine 89, and serine 298 each contribute to the [4Fe-4S] cluster site. In terms of domain architecture, Radical SAM core spans 68-287 (WEDREATFLI…KDEADAIGYS (220 aa)).

This sequence belongs to the radical SAM superfamily. Lipoyl synthase family. It depends on [4Fe-4S] cluster as a cofactor.

Its subcellular location is the cytoplasm. It catalyses the reaction [[Fe-S] cluster scaffold protein carrying a second [4Fe-4S](2+) cluster] + N(6)-octanoyl-L-lysyl-[protein] + 2 oxidized [2Fe-2S]-[ferredoxin] + 2 S-adenosyl-L-methionine + 4 H(+) = [[Fe-S] cluster scaffold protein] + N(6)-[(R)-dihydrolipoyl]-L-lysyl-[protein] + 4 Fe(3+) + 2 hydrogen sulfide + 2 5'-deoxyadenosine + 2 L-methionine + 2 reduced [2Fe-2S]-[ferredoxin]. It participates in protein modification; protein lipoylation via endogenous pathway; protein N(6)-(lipoyl)lysine from octanoyl-[acyl-carrier-protein]: step 2/2. Functionally, catalyzes the radical-mediated insertion of two sulfur atoms into the C-6 and C-8 positions of the octanoyl moiety bound to the lipoyl domains of lipoate-dependent enzymes, thereby converting the octanoylated domains into lipoylated derivatives. In Streptomyces griseus subsp. griseus (strain JCM 4626 / CBS 651.72 / NBRC 13350 / KCC S-0626 / ISP 5235), this protein is Lipoyl synthase.